Here is a 160-residue protein sequence, read N- to C-terminus: Oligoribonuclease (160 aa).

Positions 8 to 158 (LIWIDLEMTG…YNKLKKKTLI (151 aa)) constitute an Exonuclease domain. Tyr129 is an active-site residue.

This sequence belongs to the oligoribonuclease family.

The protein resides in the cytoplasm. Functionally, 3'-to-5' exoribonuclease specific for small oligoribonucleotides. The protein is Oligoribonuclease (orn) of Buchnera aphidicola subsp. Baizongia pistaciae (strain Bp).